Here is a 363-residue protein sequence, read N- to C-terminus: Mitogen-activated protein kinase 4 (363 aa).

The Protein kinase domain maps to tyrosine 30–phenylalanine 318. ATP contacts are provided by residues valine 36 to valine 44 and lysine 59. Aspartate 156 functions as the Proton acceptor in the catalytic mechanism. A phosphoserine mark is found at serine 186 and serine 187. Threonine 190 carries the phosphothreonine; by MKK5 modification. Residues threonine 190–tyrosine 192 carry the TQY motif. At tyrosine 192 the chain carries Phosphotyrosine; by MKK5.

Belongs to the protein kinase superfamily. CMGC Ser/Thr protein kinase family. MAP kinase subfamily. Requires Mg(2+) as cofactor. Post-translationally, dually phosphorylated on Thr-190 and Tyr-192, which activates the enzyme.

It carries out the reaction L-seryl-[protein] + ATP = O-phospho-L-seryl-[protein] + ADP + H(+). It catalyses the reaction L-threonyl-[protein] + ATP = O-phospho-L-threonyl-[protein] + ADP + H(+). In terms of biological role, essential for the two main proliferating life stages, the promastigotes and amastigotes, of the parasite. This Leishmania mexicana protein is Mitogen-activated protein kinase 4.